The following is a 126-amino-acid chain: SH2 domain-containing protein 1A (126 aa).

Residues 6 to 102 (VYHGKISREM…GIVTPLQYPV (97 aa)) enclose the SH2 domain. Residues 67-92 (ETAPGVHKRFFRKVKNLISAFQKPDQ) form an interaction with FYN SH3 domain region. N6-acetyllysine is present on Lys-89. Residues 100 to 126 (YPVEKSSARSPQAPTGRRDSDICLKAP) are disordered. Positions 115–126 (GRRDSDICLKAP) are enriched in basic and acidic residues. Ser-119 is subject to Phosphoserine.

As to quaternary structure, interacts with CD84, CD244, LY9, SLAMF1 and FYN. Interacts with NTRK1, NTRK2 and NTRK3.

The protein localises to the cytoplasm. In terms of biological role, cytoplasmic adapter regulating receptors of the signaling lymphocytic activation molecule (SLAM) family such as SLAMF1, CD244, LY9, CD84, SLAMF6 and SLAMF7. In SLAM signaling seems to cooperate with SH2D1B/EAT-2. Initially it has been proposed that association with SLAMF1 prevents SLAMF1 binding to inhibitory effectors including INPP5D/SHIP1 and PTPN11/SHP-2. However, by simultaneous interactions, recruits FYN which subsequently phosphorylates and activates SLAMF1. Positively regulates CD244/2B4- and CD84-mediated natural killer (NK) cell functions. Can also promote CD48-, SLAMF6 -, LY9-, and SLAMF7-mediated NK cell activation. In the context of NK cell-mediated cytotoxicity enhances conjugate formation with target cells. May also regulate the activity of the neurotrophin receptors NTRK1, NTRK2 and NTRK3. The sequence is that of SH2 domain-containing protein 1A (Sh2d1a) from Rattus norvegicus (Rat).